Consider the following 147-residue polypeptide: 3-dehydroquinate dehydratase (147 aa).

Tyr-24 (proton acceptor) is an active-site residue. Residues Asn-75, His-81, and Asp-88 each coordinate substrate. The Proton donor role is filled by His-101. Substrate-binding positions include 102 to 103 (LS) and Arg-112.

It belongs to the type-II 3-dehydroquinase family. As to quaternary structure, homododecamer.

The enzyme catalyses 3-dehydroquinate = 3-dehydroshikimate + H2O. The protein operates within metabolic intermediate biosynthesis; chorismate biosynthesis; chorismate from D-erythrose 4-phosphate and phosphoenolpyruvate: step 3/7. Functionally, catalyzes a trans-dehydration via an enolate intermediate. The polypeptide is 3-dehydroquinate dehydratase (Caulobacter sp. (strain K31)).